A 927-amino-acid polypeptide reads, in one-letter code: F-box only protein 11 (927 aa).

Residues 1–132 are disordered; sequence MNSVRAANRR…STSTTENFGH (132 aa). Positions 7–16 are enriched in basic residues; the sequence is ANRRPRRVSR. Over residues 17-27 the composition is skewed to low complexity; that stretch reads PRPVQQQQQQP. The segment covering 28–68 has biased composition (pro residues); the sequence is PQQPPPQPPQQQPPQQQPPPPPQQQQQQQPPPPPPPPPPLP. The span at 114-129 shows a compositional bias: polar residues; sequence PTKNSMEGASTSTTEN. The F-box domain maps to 153-199; that stretch reads QYLQEKLPDEVVLKIFSYLLEQDLCRAACVCKRFSELANDPILWKRL. PbH1 repeat units follow at residues 395 to 417, 418 to 440, 441 to 463, 464 to 486, 487 to 509, 510 to 532, 533 to 555, 556 to 578, 579 to 601, 602 to 624, 625 to 647, 648 to 670, 671 to 693, 694 to 716, 717 to 739, 740 to 762, 763 to 785, 786 to 808, and 809 to 830; these read GACPTIKHCNISDCENVGLYITD, HAQGIYEDNEISNNALAGIWVKN, HGNPIIRRNHIHHGRDVGVFTFD, HGMGYFESCNIHRNRIAGFEVKA, YANPTVVRCEIHHGQTGGIYVHE, KGRGQFIENKIYANNFAGVWITS, NSDPTIRGNSIFNGNQGGVYIFG, DGRGLIEGNDIYGNALAGIQIRT, NSCPIVRHNKIHDGQHGGIYVHE, KGQGVIEENEVYSNTLAGVWVTT, GSTPVLRRNRIHSGKQVGVYFYD, NGHGVLEDNDIYNHMYSGVQIRT, GSNPKIRRNKIWGGQNGGILVYN, SGLGCIEDNEIFDNAMAGVWIKT, DSNPTLRRNKIHDGRDGGICIFN, GGRGLLEENDIFRNAQAGVLIST, NSHPILRKNRIFDGFAAGIEITN, HATATLEGNQIFNNRFGGLFLAS, and GVNVTMKDNKIMNNQDAIEKAV. The segment at 833-904 adopts a UBR-type zinc-finger fold; that stretch reads GQCLYKISSY…LSNPCTLAGE (72 aa).

Component of the SCF(FBXO11) complex consisting of CUL1, RBX1, SKP1 and FBXO11. Interacts with CIITA. As to expression, isoform 5 is expressed in keratinocytes, fibroblasts and melanocytes.

It localises to the nucleus. It is found in the chromosome. The protein operates within protein modification; protein ubiquitination. In terms of biological role, substrate recognition component of a SCF (SKP1-CUL1-F-box protein) E3 ubiquitin-protein ligase complex which mediates the ubiquitination and subsequent proteasomal degradation of target proteins, such as DTL/CDT2, BCL6, SNAI1 and PRDM1/BLIMP1. The SCF(FBXO11) complex mediates ubiquitination and degradation of BCL6, thereby playing a role in the germinal center B-cells terminal differentiation toward memory B-cells and plasma cells. The SCF(FBXO11) complex also mediates ubiquitination and degradation of DTL, an important step for the regulation of TGF-beta signaling, cell migration and the timing of the cell-cycle progression and exit. The SCF(FBXO11) complex also catalyzes ubiquitination and degradation of GSK3B-phosphorylated SNAI1. Binds to and neddylates phosphorylated p53/TP53, inhibiting its transcriptional activity. Plays a role in the regulatiom of erythropoiesis but not myelopoiesis or megakaryopoiesis. Mechanistically, activates erythroid genes by mediating the degradation of BAHD1, a heterochromatin-associated protein that recruits corepressors to H3K27me3 marks. Participates in macrophage cell death and inflammation in response to bacterial toxins by regulating the expression of complement 5a receptor 1/C5AR1 and IL-1beta. Acts as a critical regulator to determine the level of MHC-II by mediating the recognition of degron at the P/S/T domain of CIITA leading to its ubiquitination and subsequent degradation via the proteasome. Participates in the antiviral repsonse by initiating the activation of TBK1-IRF3-IFN-I axis. Mediates the 'Lys-63'-linked ubiquitination of TRAF3 to strengthen the interaction between TRAF3 and TBK1. The polypeptide is F-box only protein 11 (Homo sapiens (Human)).